A 134-amino-acid polypeptide reads, in one-letter code: IIYPGTLWCGHGNVSSSPDELGRFKHTDSCCRSHDMCPDVMSAGESKHGLTNTASHTRLSCDCDDKFYDCLKNSSDTISSYFVGEMYFNILDTKCYKLEHPVTGCGKRTEGRCLNYTVDKSKPKVYQWFDLRKY.

Ca(2+)-binding residues include Trp8, Gly10, and Gly12. Disulfide bonds link Cys9–Cys31, Cys30–Cys70, Cys37–Cys63, Cys61–Cys95, and Cys105–Cys113. Asn13 carries N-linked (GlcNAc...) asparagine glycosylation. The active site involves His34. Asp35 serves as a coordination point for Ca(2+). The active site involves Asp64.

Belongs to the phospholipase A2 family. Group III subfamily. The cofactor is Ca(2+). Expressed by the venom gland.

The protein localises to the secreted. The enzyme catalyses a 1,2-diacyl-sn-glycero-3-phosphocholine + H2O = a 1-acyl-sn-glycero-3-phosphocholine + a fatty acid + H(+). PLA2 catalyzes the calcium-dependent hydrolysis of the 2-acyl groups in 3-sn-phosphoglycerides. This Apis dorsata (Giant honeybee) protein is Phospholipase A2.